Consider the following 59-residue polypeptide: Large ribosomal subunit protein bL32 (59 aa).

Residues 1 to 59 are disordered; it reads MAVQQNKKSPSKRGMHRAHDFLTAPVIAIEPSTGEAHRRHHISPNGFYRGRKVVKGKDE. A compositionally biased stretch (basic residues) spans 49 to 59; the sequence is RGRKVVKGKDE.

This sequence belongs to the bacterial ribosomal protein bL32 family.

In Laribacter hongkongensis (strain HLHK9), this protein is Large ribosomal subunit protein bL32.